The following is a 439-amino-acid chain: 26S rRNA (cytosine-C(5))-methyltransferase nsun-5 (439 aa).

Residues Asp-266, Asp-293, and Asp-313 each contribute to the S-adenosyl-L-methionine site. Cys-366 (nucleophile) is an active-site residue.

This sequence belongs to the class I-like SAM-binding methyltransferase superfamily. RsmB/NOP family.

The enzyme catalyses a cytidine in 26S rRNA + S-adenosyl-L-methionine = a 5-methylcytidine in 26S rRNA + S-adenosyl-L-homocysteine + H(+). In terms of biological role, S-adenosyl-L-methionine-dependent methyltransferase which methylates the carbon-5 position of cytosine 2381 to 5-methylcytosine (m5C2381) in 26S rRNA. Plays a role in the production of mature 5S, 5.8S, 18S and 26S rRNAs and promotes the processing of the internally transcribed spacer 2 (ITS2), which separates the 5.8S and 26S rRNAs on large pre-rRNA precursors. May play a role in the translation of leucine and proline codons. May play a role in maintaining ribosomal frameshifting in response to osmotic stress. Not required for global translation. In Caenorhabditis elegans, this protein is 26S rRNA (cytosine-C(5))-methyltransferase nsun-5.